A 128-amino-acid polypeptide reads, in one-letter code: Type III secretion protein HrcQb (128 aa).

The span at 1–21 (MSTEDLYQEDVEMLDDYEDPS) shows a compositional bias: acidic residues. Residues 1–57 (MSTEDLYQEDVEMLDDYEDPSTEQHWSEEDGEPSGYATAEPDDHAAQEEQDEPPALD) form a disordered region. The segment at 50–128 (QDEPPALDSL…LQITRLVTRS (79 aa)) is hrcQb-C. Residues 78–81 (RRLD) are dimer-dimer interface.

The protein belongs to the FliN/MopA/SpaO family. In terms of assembly, homotetramer. The four monomers assemble into two tightly bound homodimers. Interacts with HrcQa.

The protein localises to the cytoplasm. In terms of biological role, component of the type III secretion system, which is required for effector protein delivery, parasitism, and pathogenicity. Probably participates in the formation of a C-ring-like assembly along with HrcQa. The sequence is that of Type III secretion protein HrcQb (hrcQb) from Pseudomonas savastanoi pv. phaseolicola (Pseudomonas syringae pv. phaseolicola).